The chain runs to 497 residues: 4,4'-diaponeurosporene oxygenase (497 aa).

Position 7 to 19 (7 to 19 (VIGGGLGGISAAI)) interacts with FAD.

The protein belongs to the carotenoid/retinoid oxidoreductase family. CrtP subfamily. FAD serves as cofactor.

It carries out the reaction all-trans-4,4'-diaponeurosporene + 2 AH2 + 2 O2 = 4,4'-diaponeurosporenal + 2 A + 3 H2O. The protein operates within carotenoid biosynthesis; staphyloxanthin biosynthesis; staphyloxanthin from farnesyl diphosphate: step 3/5. In terms of biological role, involved in the biosynthesis of the yellow-orange carotenoid staphyloxanthin, which plays a role in the virulence via its protective function against oxidative stress. Catalyzes the oxidation of the terminal methyl side group of 4,4'-diaponeurosporene to form 4,4'-diaponeurosporen-4-al. The C40 carotenoid lycopene is a poor substrate. The polypeptide is 4,4'-diaponeurosporene oxygenase (Staphylococcus aureus (strain Mu50 / ATCC 700699)).